The primary structure comprises 491 residues: Glutamyl-tRNA(Gln) amidotransferase subunit A (491 aa).

Residues Lys-78 and Ser-158 each act as charge relay system in the active site. The active-site Acyl-ester intermediate is Ser-182.

It belongs to the amidase family. GatA subfamily. Heterotrimer of A, B and C subunits.

The catalysed reaction is L-glutamyl-tRNA(Gln) + L-glutamine + ATP + H2O = L-glutaminyl-tRNA(Gln) + L-glutamate + ADP + phosphate + H(+). Its function is as follows. Allows the formation of correctly charged Gln-tRNA(Gln) through the transamidation of misacylated Glu-tRNA(Gln) in organisms which lack glutaminyl-tRNA synthetase. The reaction takes place in the presence of glutamine and ATP through an activated gamma-phospho-Glu-tRNA(Gln). This Bradyrhizobium sp. (strain ORS 278) protein is Glutamyl-tRNA(Gln) amidotransferase subunit A.